Reading from the N-terminus, the 381-residue chain is Palmitoyltransferase SWF1 (381 aa).

Topologically, residues 1–4 (MWLK) are lumenal. A helical transmembrane segment spans residues 5–25 (IYLLSILAISVFTFVFLFGAL). The Cytoplasmic portion of the chain corresponds to 26–64 (PQFEDTAVWKFRKWLSNRPAAIRSWDSKYCGGRLSVVGD). Residues 65-85 (FCGSVVAPAAPWSVPILYCAF) traverse the membrane as a helical segment. Residues 86–107 (TTYMFSAYYEDLHPFIAENHWY) lie on the Lumenal side of the membrane. The chain crosses the membrane as a helical span at residues 108 to 128 (YAWLAPVAYTILVVSFVLATF). Residues 129-201 (SDPGKITKQN…NTVGLYNYRW (73 aa)) are Cytoplasmic-facing. The 51-residue stretch at 157-207 (TECSTCKFTKPARSKHDRFTNKCVAKFDHYCLWINNTVGLYNYRWFLFFLL) folds into the DHHC domain. Catalysis depends on cysteine 187, which acts as the S-palmitoyl cysteine intermediate. Residues 202 to 222 (FLFFLLGNVWTLCWGALLAGL) form a helical membrane-spanning segment. Residues 223–257 (KMIVMVAAEYKDHPKPLPSIFSQWWQVMITNENKR) are Lumenal-facing. A helical transmembrane segment spans residues 258–278 (VGIIFLLSVSTGALACAFTAM). The Cytoplasmic portion of the chain corresponds to 279 to 381 (HFYYIYLGAT…KAVMFPNSAY (103 aa)).

The protein belongs to the DHHC palmitoyltransferase family. SWF1 subfamily.

It is found in the endoplasmic reticulum membrane. It catalyses the reaction L-cysteinyl-[protein] + hexadecanoyl-CoA = S-hexadecanoyl-L-cysteinyl-[protein] + CoA. Its function is as follows. Palmitoyltransferase that targets several endosomal SNAREs. Palmitoylates the SNAREs at cysteine residues close to the cytoplasmic end of their transmembrane domain. May have a role in the cellular quality control of transmembrane domain-containing proteins. This chain is Palmitoyltransferase SWF1 (SWF1), found in Yarrowia lipolytica (strain CLIB 122 / E 150) (Yeast).